The sequence spans 279 residues: Probable flavonol synthase 4 (279 aa).

The tract at residues 1-25 is disordered; the sequence is MEVERDQHKPPLSLQNNKIPSSQNF. Positions 13–25 are enriched in polar residues; that stretch reads SLQNNKIPSSQNF. Residues 156-256 form the Fe2OG dioxygenase domain; the sequence is GAGYLMKINY…RMSSVVHIKP (101 aa). Residue 164 to 166 participates in 2-oxoglutarate binding; the sequence is NYY. The Fe cation site is built by His-181, Asp-183, and His-237. 247–249 lines the 2-oxoglutarate pocket; sequence RMS.

It belongs to the iron/ascorbate-dependent oxidoreductase family. Requires Fe(2+) as cofactor.

The catalysed reaction is a (2R,3R)-dihydroflavonol + 2-oxoglutarate + O2 = a flavonol + succinate + CO2 + H2O. It functions in the pathway secondary metabolite biosynthesis; flavonoid biosynthesis. The sequence is that of Probable flavonol synthase 4 (FLS4) from Arabidopsis thaliana (Mouse-ear cress).